The sequence spans 177 residues: Large ribosomal subunit protein uL6 (177 aa).

It belongs to the universal ribosomal protein uL6 family. In terms of assembly, part of the 50S ribosomal subunit.

In terms of biological role, this protein binds to the 23S rRNA, and is important in its secondary structure. It is located near the subunit interface in the base of the L7/L12 stalk, and near the tRNA binding site of the peptidyltransferase center. This is Large ribosomal subunit protein uL6 from Rhizobium etli (strain CIAT 652).